Here is a 414-residue protein sequence, read N- to C-terminus: Arrestin domain-containing protein 3 (414 aa).

Short sequence motifs (PPxY motif) lie at residues 346–349 (PPSY) and 391–394 (PPLY). A disordered region spans residues 393–414 (LYSEIDPNPDQSADDRPSCPSR). Over residues 405-414 (ADDRPSCPSR) the composition is skewed to basic and acidic residues.

This sequence belongs to the arrestin family. As to quaternary structure, interacts (via PPxY motifs) with NEDD4 (via WW domains). Interacts with ADRB2. Interacts with ADRB3. Interacts with HGS (via PPxY motifs). Does not bind TXN (thioredoxin). Interacts with ITCH. Interacts with WWP1 (via WW domains). In terms of tissue distribution, highly expressed in skeletal muscle, placenta, kidney, lung, liver, blood, adrenal gland, lymph node, mammary gland, thyroid, and trachea. Very low levels in colon, thymus, spleen, small intestine, bladder and bone marrow. Strong expression in differentiated adipocytes compared to preadipocytes. Detected in omental fat and subcutaneous fat tissue.

The protein localises to the cytoplasm. It localises to the cell membrane. The protein resides in the lysosome. Its subcellular location is the endosome. It is found in the early endosome. Its function is as follows. Adapter protein that plays a role in regulating cell-surface expression of adrenergic receptors and probably also other G protein-coupled receptors. Plays a role in NEDD4-mediated ubiquitination and endocytosis af activated ADRB2 and subsequent ADRB2 degradation. May recruit NEDD4 to ADRB2. Alternatively, may function as adapter protein that does not play a major role in recruiting NEDD4 to ADRB2, but rather plays a role in a targeting ADRB2 to endosomes. The sequence is that of Arrestin domain-containing protein 3 (ARRDC3) from Homo sapiens (Human).